The sequence spans 316 residues: Probable cobalamin biosynthesis protein CobD (316 aa).

5 consecutive transmembrane segments (helical) span residues 1-21, 50-70, 89-109, 165-185, and 294-314; these read MITE…DIVL, ISGM…GFAL, ILAL…KSLI, PLFY…ALAF, and ISLI…LLIL.

The protein belongs to the CobD/CbiB family.

The protein localises to the cell membrane. The protein operates within cofactor biosynthesis; adenosylcobalamin biosynthesis. Its function is as follows. Converts cobyric acid to cobinamide by the addition of aminopropanol on the F carboxylic group. In Methanothrix thermoacetophila (strain DSM 6194 / JCM 14653 / NBRC 101360 / PT) (Methanosaeta thermophila), this protein is Probable cobalamin biosynthesis protein CobD.